The chain runs to 1341 residues: DNA-directed RNA polymerase subunit beta (1341 aa).

The protein belongs to the RNA polymerase beta chain family. The RNAP catalytic core consists of 2 alpha, 1 beta, 1 beta' and 1 omega subunit. When a sigma factor is associated with the core the holoenzyme is formed, which can initiate transcription.

It carries out the reaction RNA(n) + a ribonucleoside 5'-triphosphate = RNA(n+1) + diphosphate. DNA-dependent RNA polymerase catalyzes the transcription of DNA into RNA using the four ribonucleoside triphosphates as substrates. The chain is DNA-directed RNA polymerase subunit beta from Pseudoalteromonas translucida (strain TAC 125).